The primary structure comprises 245 residues: Ubiquinone biosynthesis O-methyltransferase (245 aa).

S-adenosyl-L-methionine-binding residues include Arg44, Gly64, Asp85, and Met129.

It belongs to the methyltransferase superfamily. UbiG/COQ3 family.

It carries out the reaction a 3-demethylubiquinol + S-adenosyl-L-methionine = a ubiquinol + S-adenosyl-L-homocysteine + H(+). It catalyses the reaction a 3-(all-trans-polyprenyl)benzene-1,2-diol + S-adenosyl-L-methionine = a 2-methoxy-6-(all-trans-polyprenyl)phenol + S-adenosyl-L-homocysteine + H(+). Its pathway is cofactor biosynthesis; ubiquinone biosynthesis. Functionally, O-methyltransferase that catalyzes the 2 O-methylation steps in the ubiquinone biosynthetic pathway. This Proteus mirabilis (strain HI4320) protein is Ubiquinone biosynthesis O-methyltransferase.